A 431-amino-acid chain; its full sequence is uncharacterized protein (431 aa).

4Fe-4S ferredoxin-type domains lie at 336–367 (VRPV…NGLD) and 362–391 (IDNG…MDTG).

This is an uncharacterized protein from Methanothermobacter thermautotrophicus (strain ATCC 29096 / DSM 1053 / JCM 10044 / NBRC 100330 / Delta H) (Methanobacterium thermoautotrophicum).